The primary structure comprises 668 residues: Break repair meiotic recombinase recruitment factor 1 (668 aa).

Disordered stretches follow at residues 1 to 142 (MTKR…AQSP), 155 to 333 (LQEA…GCSS), 349 to 465 (LEER…GGQN), 482 to 521 (VLEHREIADDPLQEPGAQQGIPDTTSELAGQRDHLPHSAD), and 642 to 668 (LGGKAPLPYPSKGPGNIPRGDPPWREL). Over residues 114 to 125 (TRKEEMKDEDRG) the composition is skewed to basic and acidic residues. Positions 166–180 (QADSARPEQSSQSPV) are enriched in polar residues. Residues 208–251 (SQDHLSEQGADDSKPETDRVPGDGGQKEHLPSIDSEGEKPDRGA) show a composition bias toward basic and acidic residues. A compositionally biased stretch (low complexity) spans 279-296 (TPASAPTSGPAPGLGPAS). Positions 305–316 (AQGSPDPQQTPS) are enriched in polar residues. S370 carries the phosphoserine modification. The segment covering 391 to 400 (TGETTGESGE) has biased composition (low complexity).

In terms of assembly, interacts with HSF2BP (via N-terminus) and BRCA2; the interaction with HSF2BP is direct and allows the formation of a ternary complex. The complex BRME1:HSF2BP:BRCA2 interacts with SPATA22, MEIOB and RAD51.

It is found in the chromosome. Its function is as follows. Meiotic recombination factor component of recombination bridges involved in meiotic double-strand break repair. Modulates the localization of recombinases DMC1:RAD51 to meiotic double-strand break (DSB) sites through the interaction with and stabilization of the BRCA2:HSF2BP complex during meiotic recombination. Indispensable for the DSB repair, homologous synapsis, and crossover formation that are needed for progression past metaphase I, is essential for spermatogenesis and male fertility. The polypeptide is Break repair meiotic recombinase recruitment factor 1 (Homo sapiens (Human)).